Consider the following 54-residue polypeptide: Large ribosomal subunit protein bL33A (54 aa).

This sequence belongs to the bacterial ribosomal protein bL33 family.

This Mycobacterium marinum (strain ATCC BAA-535 / M) protein is Large ribosomal subunit protein bL33A.